Reading from the N-terminus, the 50-residue chain is Toxic protein HokE (50 aa).

Residues 5–25 form a helical membrane-spanning segment; that stretch reads YALAAVIVLCLTVLGFTLLVG.

The protein belongs to the Hok/Gef family.

The protein resides in the cell inner membrane. Functionally, toxic component of a type I toxin-antitoxin (TA) system; if it expressed it could be neutralized by antisense antitoxin RNA SokE. This chain is Toxic protein HokE, found in Escherichia coli (strain K12).